Consider the following 386-residue polypeptide: Succinate--CoA ligase [ADP-forming] subunit beta (386 aa).

An ATP-grasp domain is found at 9–244 (KELLRSYGVP…ETEEDPREVE (236 aa)). Residues K46, 53 to 55 (GRG), E99, C102, and E107 each bind ATP. Mg(2+) contacts are provided by N199 and D213. Substrate contacts are provided by residues N264 and 321-323 (GIM).

Belongs to the succinate/malate CoA ligase beta subunit family. As to quaternary structure, heterotetramer of two alpha and two beta subunits. It depends on Mg(2+) as a cofactor.

It carries out the reaction succinate + ATP + CoA = succinyl-CoA + ADP + phosphate. It catalyses the reaction GTP + succinate + CoA = succinyl-CoA + GDP + phosphate. It participates in carbohydrate metabolism; tricarboxylic acid cycle; succinate from succinyl-CoA (ligase route): step 1/1. Succinyl-CoA synthetase functions in the citric acid cycle (TCA), coupling the hydrolysis of succinyl-CoA to the synthesis of either ATP or GTP and thus represents the only step of substrate-level phosphorylation in the TCA. The beta subunit provides nucleotide specificity of the enzyme and binds the substrate succinate, while the binding sites for coenzyme A and phosphate are found in the alpha subunit. The protein is Succinate--CoA ligase [ADP-forming] subunit beta of Exiguobacterium sibiricum (strain DSM 17290 / CCUG 55495 / CIP 109462 / JCM 13490 / 255-15).